A 179-amino-acid chain; its full sequence is NAD(P)H-quinone oxidoreductase subunit I, chloroplastic (179 aa).

4Fe-4S ferredoxin-type domains follow at residues 55-84 (GRIH…VDWR) and 95-124 (LNYS…MTEE). [4Fe-4S] cluster-binding residues include Cys64, Cys67, Cys70, Cys74, Cys104, Cys107, Cys110, and Cys114.

The protein belongs to the complex I 23 kDa subunit family. As to quaternary structure, NDH is composed of at least 16 different subunits, 5 of which are encoded in the nucleus. [4Fe-4S] cluster serves as cofactor.

It is found in the plastid. The protein localises to the chloroplast thylakoid membrane. The catalysed reaction is a plastoquinone + NADH + (n+1) H(+)(in) = a plastoquinol + NAD(+) + n H(+)(out). It carries out the reaction a plastoquinone + NADPH + (n+1) H(+)(in) = a plastoquinol + NADP(+) + n H(+)(out). Its function is as follows. NDH shuttles electrons from NAD(P)H:plastoquinone, via FMN and iron-sulfur (Fe-S) centers, to quinones in the photosynthetic chain and possibly in a chloroplast respiratory chain. The immediate electron acceptor for the enzyme in this species is believed to be plastoquinone. Couples the redox reaction to proton translocation, and thus conserves the redox energy in a proton gradient. This is NAD(P)H-quinone oxidoreductase subunit I, chloroplastic from Acorus calamus (Sweet flag).